We begin with the raw amino-acid sequence, 71 residues long: UPF0434 protein Meso_3270 (71 aa).

The protein belongs to the UPF0434 family.

In Chelativorans sp. (strain BNC1), this protein is UPF0434 protein Meso_3270.